We begin with the raw amino-acid sequence, 248 residues long: 2-acetamido-2-deoxy-D-galactose-binding seed lectin 2 (248 aa).

Asparagine 119 carries an N-linked (GlcNAc...) asparagine; partial glycan. Mn(2+) is bound by residues glutamate 128 and aspartate 130. Residues aspartate 130, tyrosine 132, asparagine 134, and aspartate 138 each coordinate Ca(2+). Positions 138 and 144 each coordinate Mn(2+).

It belongs to the leguminous lectin family.

In Cytisus scoparius (Scotch broom), this protein is 2-acetamido-2-deoxy-D-galactose-binding seed lectin 2.